A 396-amino-acid chain; its full sequence is Chalcone synthase B (396 aa).

The active site involves Cys-170.

This sequence belongs to the thiolase-like superfamily. Chalcone/stilbene synthases family.

The enzyme catalyses (E)-4-coumaroyl-CoA + 3 malonyl-CoA + 3 H(+) = 2',4,4',6'-tetrahydroxychalcone + 3 CO2 + 4 CoA. It participates in secondary metabolite biosynthesis; flavonoid biosynthesis. The primary product of this enzyme is 4,2',4',6'-tetrahydroxychalcone (also termed naringenin-chalcone or chalcone) which can under specific conditions spontaneously isomerize into naringenin. The protein is Chalcone synthase B (CHSB) of Ipomoea purpurea (Common morning glory).